Reading from the N-terminus, the 114-residue chain is MNLITLIIMAMAMTTALYTINTYTTMKPDINKLSPYECGFDPLGNARTPISIQFFLVAILFILFDLEIVLLLPTPWSMNTNPSNTTILLITMLLTILTLGLLYEWLQGGLEWTE.

3 helical membrane passes run 3–23 (LITLIIMAMAMTTALYTINTY), 52–72 (IQFFLVAILFILFDLEIVLLL), and 86–106 (TILLITMLLTILTLGLLYEWL).

This sequence belongs to the complex I subunit 3 family.

Its subcellular location is the mitochondrion membrane. It catalyses the reaction a ubiquinone + NADH + 5 H(+)(in) = a ubiquinol + NAD(+) + 4 H(+)(out). Core subunit of the mitochondrial membrane respiratory chain NADH dehydrogenase (Complex I) that is believed to belong to the minimal assembly required for catalysis. Complex I functions in the transfer of electrons from NADH to the respiratory chain. The immediate electron acceptor for the enzyme is believed to be ubiquinone. The polypeptide is NADH-ubiquinone oxidoreductase chain 3 (MT-ND3) (Lycodon semicarinatus (Ryukyu odd-tooth snake)).